The following is a 190-amino-acid chain: Cytoplasmic envelopment protein 3 (190 aa).

The N-myristoyl glycine; by host moiety is linked to residue glycine 2. Positions 14 to 190 (GTTSGEPLKD…TKKPAASLPF (177 aa)) are disordered. Polar residues predominate over residues 30–43 (SLRSYDNIPPTSSS). The span at 44-58 (DEGEDDDDGEDDDNE) shows a compositional bias: acidic residues. A compositionally biased stretch (basic and acidic residues) spans 80 to 90 (SHREATHDGPK). Positions 108-123 (KQSKKKKKPSKHHHHQ) are enriched in basic residues. Acidic residues predominate over residues 130–139 (ETDDLDEEDT).

This sequence belongs to the herpesviridae cytoplasmic envelopment protein 3 family. Interacts with cytoplasmic envelopment protein 2; this interaction is essential for the proper localization of each protein to the assembly complex and thus for the production of infectious virus. In terms of processing, myristoylation and palmitoylation (probably on one or more of the nearby cysteines at the N-terminus) enable membrane-binding and Golgi apparatus-specific targeting and are essential for efficient packaging. Phosphorylated. Phosphorylation does not seem to be required for recycling to the host Golgi apparatus. Packaging is selective for underphosphorylated forms.

Its subcellular location is the virion tegument. The protein localises to the virion membrane. It localises to the host cell membrane. It is found in the host Golgi apparatus membrane. Functionally, plays an important role in the cytoplasmic envelopment of tegument proteins and capsids during the assembly and egress processes. Also participates in viral entry at the fusion step probably by regulating the core fusion machinery. This chain is Cytoplasmic envelopment protein 3 (UL99), found in Human cytomegalovirus (strain Merlin) (HHV-5).